Reading from the N-terminus, the 192-residue chain is Small ribosomal subunit protein eS7 (192 aa).

It belongs to the eukaryotic ribosomal protein eS7 family.

The polypeptide is Small ribosomal subunit protein eS7 (RpS7) (Anopheles gambiae (African malaria mosquito)).